Here is a 154-residue protein sequence, read N- to C-terminus: Large ribosomal subunit protein uL15 (154 aa).

Positions 1–61 (MDLSTLKPVA…GGQMPLMRRM (61 aa)) are disordered.

It belongs to the universal ribosomal protein uL15 family. Part of the 50S ribosomal subunit.

Binds to the 23S rRNA. This chain is Large ribosomal subunit protein uL15, found in Oenococcus oeni (strain ATCC BAA-331 / PSU-1).